The following is a 433-amino-acid chain: Lipase 2 (433 aa).

Positions 165 to 167 (HGG) match the Involved in the stabilization of the negatively charged intermediate by the formation of the oxyanion hole motif. Catalysis depends on Ser239, which acts as the Charge relay system. Active-site residues include Asp361 and His391.

This sequence belongs to the 'GDXG' lipolytic enzyme family.

It catalyses the reaction a triacylglycerol + H2O = a diacylglycerol + a fatty acid + H(+). This is Lipase 2 (lip2) from Moraxella sp. (strain TA144).